The primary structure comprises 164 residues: 6,7-dimethyl-8-ribityllumazine synthase (164 aa).

5-amino-6-(D-ribitylamino)uracil contacts are provided by residues Tyr30, 61–63 (ALE), and 85–87 (CVI). 90-91 (ET) contributes to the (2S)-2-hydroxy-3-oxobutyl phosphate binding site. Catalysis depends on His93, which acts as the Proton donor. Residue Asn118 participates in 5-amino-6-(D-ribitylamino)uracil binding. Arg132 is a (2S)-2-hydroxy-3-oxobutyl phosphate binding site.

The protein belongs to the DMRL synthase family.

The enzyme catalyses (2S)-2-hydroxy-3-oxobutyl phosphate + 5-amino-6-(D-ribitylamino)uracil = 6,7-dimethyl-8-(1-D-ribityl)lumazine + phosphate + 2 H2O + H(+). Its pathway is cofactor biosynthesis; riboflavin biosynthesis; riboflavin from 2-hydroxy-3-oxobutyl phosphate and 5-amino-6-(D-ribitylamino)uracil: step 1/2. Catalyzes the formation of 6,7-dimethyl-8-ribityllumazine by condensation of 5-amino-6-(D-ribitylamino)uracil with 3,4-dihydroxy-2-butanone 4-phosphate. This is the penultimate step in the biosynthesis of riboflavin. This chain is 6,7-dimethyl-8-ribityllumazine synthase, found in Methylobacterium radiotolerans (strain ATCC 27329 / DSM 1819 / JCM 2831 / NBRC 15690 / NCIMB 10815 / 0-1).